We begin with the raw amino-acid sequence, 1938 residues long: Myosin-1 (1938 aa).

A Myosin N-terminal SH3-like domain is found at 33 to 82 (DAKTSVFVADPKESFVKATVQSREGGKVTAKTEAGATVTVKEDQCFPMNP). Thr64 and Thr69 each carry phosphothreonine. The Myosin motor domain occupies 86–781 (DKIEDMAMMT…LLGLLEEMRD (696 aa)). Lys130 bears the N6,N6,N6-trimethyllysine mark. Residue 179–186 (GESGAGKT) coordinates ATP. Tyr389 is subject to Phosphotyrosine. Thr419 is modified (phosphothreonine). Tyr424 carries the phosphotyrosine modification. Ser625 is subject to Phosphoserine. The interval 658-680 (LNKLMTNLRSTHPHFVRCIIPNE) is actin-binding. Residue His756 is modified to Pros-methylhistidine. The tract at residues 760–774 (KFGHTKVFFKAGLLG) is actin-binding. One can recognise an IQ domain in the interval 784–813 (LAQIITRTQARCRGFLARVEYQRMVERRES). A coiled-coil region spans residues 842-1938 (LLKSAETEKE…EVHTKIISEE (1097 aa)). A phosphoserine mark is found at Ser1091 and Ser1095. Disordered stretches follow at residues 1124 to 1146 (EIEA…SREL) and 1152 to 1171 (RLEE…KKRE). A compositionally biased stretch (basic and acidic residues) spans 1127-1146 (AERASRAKAEKQRSDLSREL). A phosphoserine mark is found at Ser1161 and Ser1236. Thr1240 carries the post-translational modification Phosphothreonine. Phosphoserine is present on Ser1242. Thr1254 carries the post-translational modification Phosphothreonine. A Phosphoserine modification is found at Ser1260. Thr1285 is subject to Phosphothreonine. Ser1291, Ser1302, and Ser1305 each carry phosphoserine. Tyr1463 carries the phosphotyrosine modification. Position 1466 is a phosphothreonine (Thr1466). Residue Ser1473 is modified to Phosphoserine. Position 1491 is a phosphotyrosine (Tyr1491). The residue at position 1494 (Ser1494) is a Phosphoserine. Thr1500 bears the Phosphothreonine mark. Ser1513 is modified (phosphoserine). Thr1516 carries the phosphothreonine modification. Phosphoserine occurs at positions 1541, 1553, 1573, 1713, and 1725. Thr1729 and Thr1735 each carry phosphothreonine. The residue at position 1738 (Ser1738) is a Phosphoserine.

The protein belongs to the TRAFAC class myosin-kinesin ATPase superfamily. Myosin family. As to quaternary structure, muscle myosin is a hexameric protein that consists of 2 heavy chain subunits (MHC), 2 alkali light chain subunits (MLC) and 2 regulatory light chain subunits (MLC-2). Interacts with SLC26A5.

Its subcellular location is the cytoplasm. The protein localises to the myofibril. Its function is as follows. Required for normal hearing. It plays a role in cochlear amplification of auditory stimuli, likely through the positive regulation of prestin (SLC26A5) activity and outer hair cell (OHC) electromotility. This chain is Myosin-1 (MYH1), found in Equus caballus (Horse).